The following is a 362-amino-acid chain: Phosphoserine aminotransferase (362 aa).

Arginine 43 is a binding site for L-glutamate. Pyridoxal 5'-phosphate contacts are provided by residues 77 to 78 (AS), tryptophan 103, threonine 153, aspartate 173, and glutamine 196. N6-(pyridoxal phosphate)lysine is present on lysine 197. Residue 238-239 (NT) coordinates pyridoxal 5'-phosphate.

Belongs to the class-V pyridoxal-phosphate-dependent aminotransferase family. SerC subfamily. Homodimer. The cofactor is pyridoxal 5'-phosphate.

Its subcellular location is the cytoplasm. It carries out the reaction O-phospho-L-serine + 2-oxoglutarate = 3-phosphooxypyruvate + L-glutamate. It catalyses the reaction 4-(phosphooxy)-L-threonine + 2-oxoglutarate = (R)-3-hydroxy-2-oxo-4-phosphooxybutanoate + L-glutamate. It participates in amino-acid biosynthesis; L-serine biosynthesis; L-serine from 3-phospho-D-glycerate: step 2/3. Functionally, catalyzes the reversible conversion of 3-phosphohydroxypyruvate to phosphoserine and of 3-hydroxy-2-oxo-4-phosphonooxybutanoate to phosphohydroxythreonine. This chain is Phosphoserine aminotransferase, found in Lysinibacillus sphaericus (strain C3-41).